The sequence spans 434 residues: MNRKTSESLYQEAQHVIVGGVNSPSRAYKGVGGGTPVFMERGEGAYFYDVDGNRYIDYLAAYGPIITGHAHPVITKAIQDQAAKGVLFGTPTRLENEFAQELTNAIPSLEKVRFVNSGTEAVMTTIRVARAYTGKEKIIKFAGCYHGHSDLVLVAAGSGPSTLGTPDSAGVTAATASEVITVPFNDIEAFKEALAHWGSETAAVLVEPIVGNFGIVEPEPGFLEAVNDLAHSAGALVIYDEVITAFRFMYGGAQDYLNVKPDMTALGKIIGGGLPIGAYGGRMDIMEQVAPLGPAYQAGTMAGNPASMSAGIACLEVLRTEGVYEKLDELGARLEEGLYLAAAKANVPISINRLKGALTVYFTDEPVIDYEGAKRSNGDQFSVFFKAMLNEGIHLAPSKYEAWFLTIAHTKNDIDETIEAAYRSFKTVAAGFYS.

N6-(pyridoxal phosphate)lysine is present on Lys-268.

This sequence belongs to the class-III pyridoxal-phosphate-dependent aminotransferase family. HemL subfamily. As to quaternary structure, homodimer. Pyridoxal 5'-phosphate is required as a cofactor.

The protein resides in the cytoplasm. The enzyme catalyses (S)-4-amino-5-oxopentanoate = 5-aminolevulinate. The protein operates within porphyrin-containing compound metabolism; protoporphyrin-IX biosynthesis; 5-aminolevulinate from L-glutamyl-tRNA(Glu): step 2/2. This is Glutamate-1-semialdehyde 2,1-aminomutase 1 from Shouchella clausii (strain KSM-K16) (Alkalihalobacillus clausii).